We begin with the raw amino-acid sequence, 337 residues long: Phosphate acyltransferase (337 aa).

This sequence belongs to the PlsX family. Homodimer. Probably interacts with PlsY.

Its subcellular location is the cytoplasm. It catalyses the reaction a fatty acyl-[ACP] + phosphate = an acyl phosphate + holo-[ACP]. It participates in lipid metabolism; phospholipid metabolism. In terms of biological role, catalyzes the reversible formation of acyl-phosphate (acyl-PO(4)) from acyl-[acyl-carrier-protein] (acyl-ACP). This enzyme utilizes acyl-ACP as fatty acyl donor, but not acyl-CoA. This Acidobacterium capsulatum (strain ATCC 51196 / DSM 11244 / BCRC 80197 / JCM 7670 / NBRC 15755 / NCIMB 13165 / 161) protein is Phosphate acyltransferase.